Reading from the N-terminus, the 85-residue chain is Large ribosomal subunit protein bL27 (85 aa).

This sequence belongs to the bacterial ribosomal protein bL27 family.

This Stutzerimonas stutzeri (strain A1501) (Pseudomonas stutzeri) protein is Large ribosomal subunit protein bL27.